The following is a 612-amino-acid chain: Dihydroxy-acid dehydratase (612 aa).

Residue Asp81 coordinates Mg(2+). Cys122 is a binding site for [2Fe-2S] cluster. Residues Asp123 and Lys124 each coordinate Mg(2+). Lys124 carries the N6-carboxylysine modification. Cys193 contacts [2Fe-2S] cluster. Glu489 lines the Mg(2+) pocket. Ser515 (proton acceptor) is an active-site residue.

This sequence belongs to the IlvD/Edd family. In terms of assembly, homodimer. [2Fe-2S] cluster is required as a cofactor. It depends on Mg(2+) as a cofactor.

It catalyses the reaction (2R)-2,3-dihydroxy-3-methylbutanoate = 3-methyl-2-oxobutanoate + H2O. The enzyme catalyses (2R,3R)-2,3-dihydroxy-3-methylpentanoate = (S)-3-methyl-2-oxopentanoate + H2O. It functions in the pathway amino-acid biosynthesis; L-isoleucine biosynthesis; L-isoleucine from 2-oxobutanoate: step 3/4. It participates in amino-acid biosynthesis; L-valine biosynthesis; L-valine from pyruvate: step 3/4. In terms of biological role, functions in the biosynthesis of branched-chain amino acids. Catalyzes the dehydration of (2R,3R)-2,3-dihydroxy-3-methylpentanoate (2,3-dihydroxy-3-methylvalerate) into 2-oxo-3-methylpentanoate (2-oxo-3-methylvalerate) and of (2R)-2,3-dihydroxy-3-methylbutanoate (2,3-dihydroxyisovalerate) into 2-oxo-3-methylbutanoate (2-oxoisovalerate), the penultimate precursor to L-isoleucine and L-valine, respectively. In Pseudomonas aeruginosa (strain LESB58), this protein is Dihydroxy-acid dehydratase.